We begin with the raw amino-acid sequence, 162 residues long: Shikimate kinase (162 aa).

10–15 (GAGKST) serves as a coordination point for ATP. A Mg(2+)-binding site is contributed by Ser-14. Substrate contacts are provided by Asp-28, Arg-52, and Gly-73. Arg-113 is a binding site for ATP. Arg-129 lines the substrate pocket.

The protein belongs to the shikimate kinase family. In terms of assembly, monomer. Mg(2+) serves as cofactor.

It localises to the cytoplasm. The catalysed reaction is shikimate + ATP = 3-phosphoshikimate + ADP + H(+). Its pathway is metabolic intermediate biosynthesis; chorismate biosynthesis; chorismate from D-erythrose 4-phosphate and phosphoenolpyruvate: step 5/7. In terms of biological role, catalyzes the specific phosphorylation of the 3-hydroxyl group of shikimic acid using ATP as a cosubstrate. In Lactococcus lactis subsp. cremoris (strain SK11), this protein is Shikimate kinase.